The chain runs to 514 residues: Cilia- and flagella-associated protein 53 (514 aa).

A coiled-coil region spans residues 207–429 (EDRLAKERRE…ERINEGLKEL (223 aa)).

The protein belongs to the CFAP53 family. Microtubule inner protein component of sperm flagellar doublet microtubules. Interacts with PIERCE1 and PIERCE2; the interactions link outer dynein arms docking complex (ODA-DC) to the internal microtubule inner proteins (MIP) in cilium axoneme. Interacts with CCDC38. Interacts with CCDC42 and IFT88. Interacts with centriolar satellite proteins PIBF1/CEP90 and PCM1. Interacts with dyneins DNAIC1, DNAIC2 AND DNAH11 and with ODA-DC component ODAD4/TTC25. As to expression, expressed in trachea multiciliated cells.

It localises to the cytoplasm. The protein resides in the cytoskeleton. The protein localises to the cilium axoneme. Its subcellular location is the flagellum axoneme. It is found in the microtubule organizing center. It localises to the centrosome. The protein resides in the centriolar satellite. The protein localises to the spindle pole. Functionally, microtubule inner protein (MIP) part of the dynein-decorated doublet microtubules (DMTs) in cilia axoneme, which is required for motile cilia beating. Regulates motility patterns of both 9+0 and 9+2 motile cilia through differential localization and recruitment of axonemal dynein components. Required for centriolar satellite integrity and non-motile cilium assembly. Required for motile cilium formation. Through its role in beating of primary cilia, involved in the establishment of organ laterality during embryogenesis. Required for sperm flagellum biogenesis and is essential for male fertility. This Bos taurus (Bovine) protein is Cilia- and flagella-associated protein 53 (CFAP53).